The chain runs to 631 residues: MSKVLGIDLGTTNSCMAIYEGKEAKVIPNKEGKNTTPSVVAFTDKGEVLVGDPAKRQMITNPKRTIYSVKRIMGMMCNEEKAQEAKKRLPYNIVDRNGACAVDVDGKVYTPQEISAKILMKLKEDAEAYLGQEITEAVITVPAYFNDAQRKATKEAGQIAGLNVLRIINEPTAAALAYGLDKKEAEKIVVYDLGGGTFDVTILETGDNVVEVLATGGDAFLGGDDFDNRIIDWLVDEFKKETGIDLKSDIMALQRLKEAAENAKKELSSAMETEINLPFITADQSGPKHLVKKLTRAKFESLIEDLVEKTITIANNVLKDSGLSKDEVNEVVLVGGSTRIPLVQQKVKEFFGKEPNKSVNPDEVVAVGAAIQGAVIKGDVKDVLLLDVTPLSLGIETLGGVMTKIIEKGTTIPVKKSQIFSTAEDNQPAVTIHVLQGEREMAKDNKSLGQFTLEGIPPAPRGVPQIEVTFDIDANGILTVSAKDKATGKEQKITVTGTSGLSEEEIQRMIQDAEAHKEEDRKRKELVETRNQADALAYQTEKSLKEVGNAISADERAQIEAALNDLKNVLKDENATKEQIEAKVQALTQVSHKLAEAMYKKEQGQTGGTEQGGTEQKKSGGDDDVIDAEVE.

Phosphothreonine; by autocatalysis is present on Thr-197. A disordered region spans residues 598–631 (MYKKEQGQTGGTEQGGTEQKKSGGDDDVIDAEVE). The span at 622–631 (DDDVIDAEVE) shows a compositional bias: acidic residues.

It belongs to the heat shock protein 70 family.

Acts as a chaperone. The polypeptide is Chaperone protein DnaK (Nitratiruptor sp. (strain SB155-2)).